The chain runs to 127 residues: Large ribosomal subunit protein bL12 (127 aa).

N6-methyllysine is present on residues K77 and K88.

Belongs to the bacterial ribosomal protein bL12 family. In terms of assembly, homodimer. Part of the ribosomal stalk of the 50S ribosomal subunit. Forms a multimeric L10(L12)X complex, where L10 forms an elongated spine to which 2 to 4 L12 dimers bind in a sequential fashion. Binds GTP-bound translation factors.

Forms part of the ribosomal stalk which helps the ribosome interact with GTP-bound translation factors. Is thus essential for accurate translation. The sequence is that of Large ribosomal subunit protein bL12 from Nitratidesulfovibrio vulgaris (strain DSM 19637 / Miyazaki F) (Desulfovibrio vulgaris).